Consider the following 405-residue polypeptide: L-carnitine CoA-transferase (405 aa).

CoA-binding residues include Lys-97 and Arg-104. The Nucleophile role is filled by Asp-169.

It belongs to the CoA-transferase III family. CaiB subfamily. As to quaternary structure, homodimer.

Its subcellular location is the cytoplasm. It catalyses the reaction crotonobetainyl-CoA + (R)-carnitine = crotonobetaine + (R)-carnitinyl-CoA. The catalysed reaction is 4-(trimethylamino)butanoyl-CoA + (R)-carnitine = (R)-carnitinyl-CoA + 4-(trimethylamino)butanoate. The protein operates within amine and polyamine metabolism; carnitine metabolism. Functionally, catalyzes the reversible transfer of the CoA moiety from gamma-butyrobetainyl-CoA to L-carnitine to generate L-carnitinyl-CoA and gamma-butyrobetaine. Is also able to catalyze the reversible transfer of the CoA moiety from gamma-butyrobetainyl-CoA or L-carnitinyl-CoA to crotonobetaine to generate crotonobetainyl-CoA. The protein is L-carnitine CoA-transferase of Salmonella enteritidis PT4 (strain P125109).